A 477-amino-acid chain; its full sequence is Glycogen synthase (477 aa).

Lysine 15 contacts ADP-alpha-D-glucose.

This sequence belongs to the glycosyltransferase 1 family. Bacterial/plant glycogen synthase subfamily.

The enzyme catalyses [(1-&gt;4)-alpha-D-glucosyl](n) + ADP-alpha-D-glucose = [(1-&gt;4)-alpha-D-glucosyl](n+1) + ADP + H(+). It participates in glycan biosynthesis; glycogen biosynthesis. Its function is as follows. Synthesizes alpha-1,4-glucan chains using ADP-glucose. This Shigella flexneri serotype 5b (strain 8401) protein is Glycogen synthase.